The primary structure comprises 226 residues: ATP-dependent dethiobiotin synthetase BioD (226 aa).

Glu-12–Val-17 contributes to the ATP binding site. Thr-16 is a Mg(2+) binding site. The active site involves Lys-39. Thr-43 provides a ligand contact to substrate. Residues Asp-47, Glu-108–Gly-111, Asn-168–Cys-169, and Pro-200–Ile-202 contribute to the ATP site. Mg(2+) is bound by residues Asp-47 and Glu-108.

This sequence belongs to the dethiobiotin synthetase family. As to quaternary structure, homodimer. Mg(2+) serves as cofactor.

Its subcellular location is the cytoplasm. The enzyme catalyses (7R,8S)-7,8-diammoniononanoate + CO2 + ATP = (4R,5S)-dethiobiotin + ADP + phosphate + 3 H(+). The catalysed reaction is (7R,8S)-8-amino-7-(carboxyamino)nonanoate + ATP = (4R,5S)-dethiobiotin + ADP + phosphate + H(+). It participates in cofactor biosynthesis; biotin biosynthesis; biotin from 7,8-diaminononanoate: step 1/2. Functionally, catalyzes a mechanistically unusual reaction, the ATP-dependent insertion of CO2 between the N7 and N8 nitrogen atoms of 7,8-diaminopelargonic acid (DAPA, also called 7,8-diammoniononanoate) to form a ureido ring. This cyanobacterium does not encode bioA (which catalyzes the formation of the precursor for this reaction in the cannonical pathway), instead it encodes bioU, which replaces bioA and also performs the first half of the cannonical BioD reaction. Thus in this organism BioD has a different substrate. This is ATP-dependent dethiobiotin synthetase BioD from Gloeothece citriformis (strain PCC 7424) (Cyanothece sp. (strain PCC 7424)).